The sequence spans 342 residues: Trace amine-associated receptor 3 (342 aa).

The Extracellular portion of the chain corresponds to 1–35; that stretch reads MDLIYIPEDLSSCPKFGNKSCPPTNRSFRVRLIMY. N-linked (GlcNAc...) asparagine glycans are attached at residues N18 and N25. 2 disulfides stabilise this stretch: C21–C185 and C104–C189. A helical membrane pass occupies residues 36–56; it reads LLMTGAMVITIFGNLVIIISI. Topologically, residues 57-68 are cytoplasmic; that stretch reads SHFKQLHSPTNF. The chain crosses the membrane as a helical span at residues 69-89; that stretch reads LILSMATTDFLLGFVIMPYSM. At 90 to 150 the chain is on the extracellular side; sequence VRSVESCWYF…TTMTASMIKR (61 aa). Residues 151–168 traverse the membrane as a helical segment; the sequence is LLFFCWAAPALFSFGLVL. Residues 169 to 172 lie on the Cytoplasmic side of the membrane; that stretch reads SEAN. The tract at residues 173–186 is extracellular Loop 2 (ECL2); the sequence is VSGMQSYEILIACF. A helical membrane pass occupies residues 173 to 193; it reads VSGMQSYEILIACFNFCALTF. Over 194–198 the chain is Extracellular; the sequence is NKFWG. A helical membrane pass occupies residues 199-223; that stretch reads TILFTTCFFTPGSIMVGIYGKIFIV. The Cytoplasmic segment spans residues 224-256; sequence SRRHARALGNMPENTKGAGRNLSKKKDRKAAKT. Residues 257-277 form a helical membrane-spanning segment; sequence LGIVMGVFLACWLPCFLAVLI. Residues 278-286 are Extracellular-facing; sequence DPYLDYSTP. Residues 287–307 traverse the membrane as a helical segment; sequence IIVLDLLVWLGYFNSTCNPLI. Residues 308-342 are Cytoplasmic-facing; that stretch reads HGFFYPWFRKALEHIVSGKIFRSNSDTANLFPEAH.

This sequence belongs to the G-protein coupled receptor 1 family.

It is found in the cell membrane. In terms of biological role, olfactory receptor activated by several primary trace amines, including isoamylamine. Activated by isoamylamine and cyclohexylamine, but not to the corresponding alcohols, isoamylalcohol and cyclohexanol. This receptor is probably mediated by the G(s)-class of G-proteins which activate adenylate cyclase. The sequence is that of Trace amine-associated receptor 3 (Taar3) from Rattus norvegicus (Rat).